Consider the following 291-residue polypeptide: uncharacterized protein (291 aa).

This is an uncharacterized protein from Acanthamoeba polyphaga mimivirus (APMV).